The sequence spans 152 residues: Putative pre-16S rRNA nuclease (152 aa).

It belongs to the YqgF nuclease family.

Its subcellular location is the cytoplasm. Its function is as follows. Could be a nuclease involved in processing of the 5'-end of pre-16S rRNA. The polypeptide is Putative pre-16S rRNA nuclease (Synechocystis sp. (strain ATCC 27184 / PCC 6803 / Kazusa)).